A 192-amino-acid polypeptide reads, in one-letter code: Xanthine phosphoribosyltransferase (192 aa).

2 residues coordinate xanthine: Leu-20 and Asn-27. 128 to 132 contacts 5-phospho-alpha-D-ribose 1-diphosphate; sequence ANGDA. Lys-156 provides a ligand contact to xanthine.

The protein belongs to the purine/pyrimidine phosphoribosyltransferase family. Xpt subfamily. In terms of assembly, homodimer.

The protein resides in the cytoplasm. It carries out the reaction XMP + diphosphate = xanthine + 5-phospho-alpha-D-ribose 1-diphosphate. Its pathway is purine metabolism; XMP biosynthesis via salvage pathway; XMP from xanthine: step 1/1. Functionally, converts the preformed base xanthine, a product of nucleic acid breakdown, to xanthosine 5'-monophosphate (XMP), so it can be reused for RNA or DNA synthesis. This is Xanthine phosphoribosyltransferase from Staphylococcus aureus (strain MRSA252).